The sequence spans 248 residues: MTHLVLLLCCCVGSVCAFFSDLVKFENVTAHAGARVNLTCSVPSNESVSRIELGRGYTPGDGQLPLAVATSNNGTHITNGGYNYSLTLEWVNDSNTSVSLIIPNVTLAHAGYYTCNVTLRNCSVASGVHCNYSAGEEDDQYHANRTLTQRMHLTVIPATTIAPTTLVSHTTSTSHRPHRRPVSKRPTHKPVTLGPFPIDPWRPKTTWVHWALLLITCAVVAPVLLIIIISCLGWLAGWGRRRKGWIPL.

The signal sequence occupies residues 1–17; the sequence is MTHLVLLLCCCVGSVCA. An Ig-like domain is found at 19–125; that stretch reads FSDLVKFENV…NVTLRNCSVA (107 aa). Residues Asn-27, Asn-37, Asn-45, Asn-73, Asn-83, Asn-92, Asn-95, Asn-104, Asn-116, Asn-121, Asn-131, and Asn-144 are each glycosylated (N-linked (GlcNAc...) asparagine; by host). Cysteines 40 and 115 form a disulfide. Positions 167 to 191 are disordered; that stretch reads VSHTTSTSHRPHRRPVSKRPTHKPV. Positions 175–188 are enriched in basic residues; it reads HRPHRRPVSKRPTH. Residues 210 to 230 traverse the membrane as a helical segment; it reads WALLLITCAVVAPVLLIIIIS.

It belongs to the Epstein-Barr virus BILF2 protein family.

It is found in the membrane. This Epstein-Barr virus (strain B95-8) (HHV-4) protein is Glycoprotein BILF2.